A 273-amino-acid chain; its full sequence is Putative pyruvate, phosphate dikinase regulatory protein (273 aa).

153-160 (GVSRTSKS) serves as a coordination point for ADP.

Belongs to the pyruvate, phosphate/water dikinase regulatory protein family. PDRP subfamily.

The enzyme catalyses N(tele)-phospho-L-histidyl/L-threonyl-[pyruvate, phosphate dikinase] + ADP = N(tele)-phospho-L-histidyl/O-phospho-L-threonyl-[pyruvate, phosphate dikinase] + AMP + H(+). It carries out the reaction N(tele)-phospho-L-histidyl/O-phospho-L-threonyl-[pyruvate, phosphate dikinase] + phosphate + H(+) = N(tele)-phospho-L-histidyl/L-threonyl-[pyruvate, phosphate dikinase] + diphosphate. Bifunctional serine/threonine kinase and phosphorylase involved in the regulation of the pyruvate, phosphate dikinase (PPDK) by catalyzing its phosphorylation/dephosphorylation. In Ehrlichia canis (strain Jake), this protein is Putative pyruvate, phosphate dikinase regulatory protein.